The following is a 217-amino-acid chain: Pyridoxine/pyridoxamine 5'-phosphate oxidase (217 aa).

Residues 13 to 16 (RREY) and K71 each bind substrate. Residues 66 to 71 (RIVLLK), 81 to 82 (YT), R87, K88, and Q110 contribute to the FMN site. The substrate site is built by Y128, R132, and S136. FMN contacts are provided by residues 145–146 (QS) and W190. 196–198 (RLH) lines the substrate pocket. R200 is a binding site for FMN.

Belongs to the pyridoxamine 5'-phosphate oxidase family. Homodimer. It depends on FMN as a cofactor.

The catalysed reaction is pyridoxamine 5'-phosphate + O2 + H2O = pyridoxal 5'-phosphate + H2O2 + NH4(+). The enzyme catalyses pyridoxine 5'-phosphate + O2 = pyridoxal 5'-phosphate + H2O2. It functions in the pathway cofactor metabolism; pyridoxal 5'-phosphate salvage; pyridoxal 5'-phosphate from pyridoxamine 5'-phosphate: step 1/1. Its pathway is cofactor metabolism; pyridoxal 5'-phosphate salvage; pyridoxal 5'-phosphate from pyridoxine 5'-phosphate: step 1/1. Its function is as follows. Catalyzes the oxidation of either pyridoxine 5'-phosphate (PNP) or pyridoxamine 5'-phosphate (PMP) into pyridoxal 5'-phosphate (PLP). The protein is Pyridoxine/pyridoxamine 5'-phosphate oxidase of Yersinia pestis bv. Antiqua (strain Antiqua).